The primary structure comprises 347 residues: Protein phosphatase 1 regulatory subunit 3G (347 aa).

Residues 1 to 77 form a disordered region; that stretch reads MDPSGEQLHR…ELQEYRRSRA (77 aa). Polar residues predominate over residues 13–22; the sequence is ASSSTSSGDP. Ser-81 carries the post-translational modification Phosphoserine. Residues 200–339 enclose the CBM21 domain; the sequence is EERLRRQRVC…NNEGANYTLR (140 aa). Residues 258–286 are disordered; sequence DPESVEPLPPLQSGDSGSKAEDSEEGPGT.

Glycogen-targeting subunit for protein phosphatase 1 (PP1). Involved in the regulation of hepatic glycogenesis in a manner coupled to the fasting-feeding cycle and distinct from other glycogen-targeting subunits. The chain is Protein phosphatase 1 regulatory subunit 3G (Ppp1r3g) from Mus musculus (Mouse).